The chain runs to 183 residues: Endoribonuclease YbeY (183 aa).

Residues histidine 143, histidine 147, and histidine 153 each coordinate Zn(2+).

It belongs to the endoribonuclease YbeY family. The cofactor is Zn(2+).

The protein localises to the cytoplasm. Its function is as follows. Single strand-specific metallo-endoribonuclease involved in late-stage 70S ribosome quality control and in maturation of the 3' terminus of the 16S rRNA. This Rickettsia bellii (strain OSU 85-389) protein is Endoribonuclease YbeY.